Here is a 257-residue protein sequence, read N- to C-terminus: Imidazole glycerol phosphate synthase subunit HisF (257 aa).

Residues aspartate 11 and aspartate 130 contribute to the active site.

It belongs to the HisA/HisF family. Heterodimer of HisH and HisF.

The protein localises to the cytoplasm. The catalysed reaction is 5-[(5-phospho-1-deoxy-D-ribulos-1-ylimino)methylamino]-1-(5-phospho-beta-D-ribosyl)imidazole-4-carboxamide + L-glutamine = D-erythro-1-(imidazol-4-yl)glycerol 3-phosphate + 5-amino-1-(5-phospho-beta-D-ribosyl)imidazole-4-carboxamide + L-glutamate + H(+). The protein operates within amino-acid biosynthesis; L-histidine biosynthesis; L-histidine from 5-phospho-alpha-D-ribose 1-diphosphate: step 5/9. Functionally, IGPS catalyzes the conversion of PRFAR and glutamine to IGP, AICAR and glutamate. The HisF subunit catalyzes the cyclization activity that produces IGP and AICAR from PRFAR using the ammonia provided by the HisH subunit. This Shewanella denitrificans (strain OS217 / ATCC BAA-1090 / DSM 15013) protein is Imidazole glycerol phosphate synthase subunit HisF.